The following is a 277-amino-acid chain: Phosphatidylglycerol--prolipoprotein diacylglyceryl transferase (277 aa).

Transmembrane regions (helical) follow at residues 18–38 (ISVKWYGVIIASAVVIALLLA), 51–71 (IIVDLLIWAIPISIISARIYY), 89–109 (IWHGGIAIYGALIGAVLTAII), and 116–136 (ISFWQLADVVAPSLIIAQAIG). Arg-137 is an a 1,2-diacyl-sn-glycero-3-phospho-(1'-sn-glycerol) binding site. The next 3 helical transmembrane spans lie at 177 to 197 (QPTFLYESLWNVLGFVILLII), 205 to 225 (GELFLGYVIWYSFGRFFIEGM), and 235 to 255 (FRVSQALSLLLIVLSIGIIIY).

Belongs to the Lgt family.

It is found in the cell membrane. It carries out the reaction L-cysteinyl-[prolipoprotein] + a 1,2-diacyl-sn-glycero-3-phospho-(1'-sn-glycerol) = an S-1,2-diacyl-sn-glyceryl-L-cysteinyl-[prolipoprotein] + sn-glycerol 1-phosphate + H(+). It functions in the pathway protein modification; lipoprotein biosynthesis (diacylglyceryl transfer). Its function is as follows. Catalyzes the transfer of the diacylglyceryl group from phosphatidylglycerol to the sulfhydryl group of the N-terminal cysteine of a prolipoprotein, the first step in the formation of mature lipoproteins. The protein is Phosphatidylglycerol--prolipoprotein diacylglyceryl transferase of Listeria monocytogenes serovar 1/2a (strain ATCC BAA-679 / EGD-e).